The following is a 487-amino-acid chain: Histamine H1 receptor (487 aa).

Over 1–29 (MSLPNSSCLLEDKMCEGNKTTMASPQLMP) the chain is Extracellular. Residues Asn-5 and Asn-18 are each glycosylated (N-linked (GlcNAc...) asparagine). The helical transmembrane segment at 30–50 (LVVVLSTICLVTVGLNLLVLY) threads the bilayer. Over 51-64 (AVRSERKLHTVGNL) the chain is Cytoplasmic. The helical transmembrane segment at 65 to 89 (YIVSLSVADLIVGAVVMPMNILYLL) threads the bilayer. Over 90 to 97 (MSKWSLGR) the chain is Extracellular. The chain crosses the membrane as a helical span at residues 98–123 (PLCLFWLSMDYVASTASIFSVFILCI). Cys-100 and Cys-180 form a disulfide bridge. The histamine site is built by Asp-107 and Thr-112. The tract at residues 107–112 (DYVAST) is important for agonist binding. The Cytoplasmic portion of the chain corresponds to 124–144 (DRYRSVQQPLRYLKYRTKTRA). A phosphothreonine mark is found at Thr-140 and Thr-142. A helical membrane pass occupies residues 145–164 (SATILGAWFLSFLWVIPILG). Topologically, residues 165–188 (WNHFMQQTSVRREDKCETDFYDVT) are extracellular. The helical transmembrane segment at 189–211 (WFKVMTAIINFYLPTLLMLWFYA) threads the bilayer. Histamine is bound at residue Asn-198. Over 212–416 (KIYKAVRQHC…MNRERKAAKQ (205 aa)) the chain is Cytoplasmic. Phosphoserine is present on Ser-230. The span at 238 to 261 (KLRPENPKGDAKKPGKESPWEVLK) shows a compositional bias: basic and acidic residues. A disordered region spans residues 238–291 (KLRPENPKGDAKKPGKESPWEVLKRKPKDAGGGSVLKSPSQTPKEMKSPVVFSQ). At Thr-279 the chain carries Phosphothreonine. A phosphoserine mark is found at Ser-344 and Ser-347. Residues 345–379 (EISEDQMLGDSQSFSRTDSDTTTETAPGKGKLRSG) are disordered. A compositionally biased stretch (polar residues) spans 353–369 (GDSQSFSRTDSDTTTET). A phosphoserine mark is found at Ser-380, Ser-396, and Ser-398. A helical transmembrane segment spans residues 417–440 (LGFIMAAFILCWIPYFIFFMVIAF). The segment at 424–428 (FILCW) is important for agonist binding. Tyr-431 contributes to the histamine binding site. Cys-441 and Cys-444 are disulfide-bonded. The Extracellular portion of the chain corresponds to 441-446 (CKNCCN). A helical membrane pass occupies residues 447-469 (EHLHMFTIWLGYINSTLNPLIYP). Residues 470–487 (LCNENFKKTFKRILHIRS) lie on the Cytoplasmic side of the membrane.

The protein belongs to the G-protein coupled receptor 1 family. Phosphorylation at sites in the second and third cytoplasmic loops independently contribute to agonist-induced receptor down-regulation.

It is found in the cell membrane. In terms of biological role, G-protein-coupled receptor for histamine, a biogenic amine that functions as an immune modulator and a neurotransmitter. Through the H1 receptor, histamine mediates the contraction of smooth muscles and increases capillary permeability due to contraction of terminal venules. Also mediates neurotransmission in the central nervous system and thereby regulates circadian rhythms, emotional and locomotor activities as well as cognitive functions. The polypeptide is Histamine H1 receptor (Homo sapiens (Human)).